The following is a 557-amino-acid chain: Potassium-transporting ATPase potassium-binding subunit (557 aa).

12 helical membrane passes run 5 to 25 (GFLL…PLGS), 63 to 83 (LSAI…MLLG), 132 to 152 (GLTV…FALI), 170 to 190 (LLRI…LFFI), 253 to 273 (FVQM…FGEV), 283 to 303 (LLWA…WAEV), 329 to 349 (VLVS…AVIA), 356 to 376 (ALGG…FGGV), 379 to 399 (GLYG…LMIG), 416 to 436 (LTAL…ALAM), 484 to 504 (LLAL…MAIA), and 526 to 546 (LFVG…FIPA).

Belongs to the KdpA family. In terms of assembly, the system is composed of three essential subunits: KdpA, KdpB and KdpC.

The protein resides in the cell inner membrane. Functionally, part of the high-affinity ATP-driven potassium transport (or Kdp) system, which catalyzes the hydrolysis of ATP coupled with the electrogenic transport of potassium into the cytoplasm. This subunit binds the periplasmic potassium ions and delivers the ions to the membrane domain of KdpB through an intramembrane tunnel. In Escherichia coli O6:H1 (strain CFT073 / ATCC 700928 / UPEC), this protein is Potassium-transporting ATPase potassium-binding subunit.